Consider the following 156-residue polypeptide: Protein S100-A9 (156 aa).

EF-hand domains follow at residues 16-51 and 54-89; these read INIF…FLKK and KNEA…LTVA. His-20 is a binding site for Zn(2+). Ser-23, Leu-26, and His-28 together coordinate Ca(2+). Residue Asp-30 coordinates Zn(2+). Residues Thr-31, Glu-36, Asp-67, Asn-69, Asp-71, Gln-73, and Glu-78 each coordinate Ca(2+). Zn(2+)-binding residues include His-91 and His-95. The interval 94–156 is disordered; it reads MHNTAPPGQG…HSHGGHGHSH (63 aa). A Pros-methylhistidine modification is found at His-106. Residues 108 to 119 are compositionally biased toward gly residues; that stretch reads PGYGKGGSGSCS. Residues 135–156 are compositionally biased toward basic residues; the sequence is GHGHGHSHGGHGHSHGGHGHSH.

This sequence belongs to the S-100 family. Homodimer. Preferentially exists as a heterodimer or heterotetramer with S100A8 known as calprotectin (S100A8/A9). S100A9 interacts with ATP2A2. S100A9 interacts with AGER, and with the heterodimeric complex formed by TLR4 and LY96 in the presence of calcium and/or zinc ions. S100A9 binds quinoline-3-carboxamides in the presence of calcium and/or zinc ions. S100A9 interacts with amyloid-beta protein 40. Calprotectin (S100A8/9) interacts with CEACAM3 and tubulin filaments in a calcium-dependent manner. Heterotetrameric calprotectin (S100A8/A9) interacts with ANXA6 and associates with tubulin filaments in activated monocytes. Calprotectin (S100A8/9) interacts with NCF2/P67PHOX, RAC1, RAC2, CYBA and CYBB. Calprotectin (S100A8/9) interacts with NOS2 to form the iNOS-S100A8/A9 transnitrosylase complex; induced by LDL(ox). Calprotectin (S100A8/9) interacts with CD69. Post-translationally, phosphorylated. Phosphorylation inhibits activation of tubulin polymerization. Methylation at His-106 by METTL9 reduces zinc-binding without affecting heterodimerization with S100A8. Found essentially in phagocytic cells.

The protein localises to the secreted. Its subcellular location is the cytoplasm. It is found in the cytoskeleton. The protein resides in the cell membrane. In terms of biological role, S100A9 is a calcium- and zinc-binding protein which plays a prominent role in the regulation of inflammatory processes and immune response. It can induce neutrophil chemotaxis, adhesion, can increase the bactericidal activity of neutrophils by promoting phagocytosis via activation of SYK, PI3K/AKT, and ERK1/2 and can induce degranulation of neutrophils by a MAPK-dependent mechanism. Predominantly found as calprotectin (S100A8/A9) which has a wide plethora of intra- and extracellular functions. The intracellular functions include: facilitating leukocyte arachidonic acid trafficking and metabolism, modulation of the tubulin-dependent cytoskeleton during migration of phagocytes and activation of the neutrophilic NADPH-oxidase. Also participates in regulatory T-cell differentiation together with CD69. Activates NADPH-oxidase by facilitating the enzyme complex assembly at the cell membrane, transferring arachidonic acid, an essential cofactor, to the enzyme complex and S100A8 contributes to the enzyme assembly by directly binding to NCF2/P67PHOX. The extracellular functions involve pro-inflammatory, antimicrobial, oxidant-scavenging and apoptosis-inducing activities. Its pro-inflammatory activity includes recruitment of leukocytes, promotion of cytokine and chemokine production, and regulation of leukocyte adhesion and migration. Acts as an alarmin or a danger associated molecular pattern (DAMP) molecule and stimulates innate immune cells via binding to pattern recognition receptors such as Toll-like receptor 4 (TLR4) and receptor for advanced glycation endproducts (AGER). Binding to TLR4 and AGER activates the MAP-kinase and NF-kappa-B signaling pathways resulting in the amplification of the pro-inflammatory cascade. Has antimicrobial activity towards bacteria and fungi and exerts its antimicrobial activity probably via chelation of Zn(2+) which is essential for microbial growth. Can induce cell death via autophagy and apoptosis and this occurs through the cross-talk of mitochondria and lysosomes via reactive oxygen species (ROS) and the process involves BNIP3. Can regulate neutrophil number and apoptosis by an anti-apoptotic effect; regulates cell survival via ITGAM/ITGB and TLR4 and a signaling mechanism involving MEK-ERK. Its role as an oxidant scavenger has a protective role in preventing exaggerated tissue damage by scavenging oxidants. The iNOS-S100A8/A9 transnitrosylase complex is proposed to direct selective inflammatory stimulus-dependent S-nitrosylation of multiple targets such as GAPDH, NXA5, EZR, MSN and VIM by recognizing a [IL]-x-C-x-x-[DE] motif. The sequence is that of Protein S100-A9 (S100A9) from Bos taurus (Bovine).